Consider the following 256-residue polypeptide: Large ribosomal subunit protein eL8B (256 aa).

The disordered stretch occupies residues 1–37 (MAPGKKVAPAPFGAKSTKSNKAKNPLTHSTPKNFGIG).

It belongs to the eukaryotic ribosomal protein eL8 family. Component of the large ribosomal subunit (LSU). Mature yeast ribosomes consist of a small (40S) and a large (60S) subunit. The 40S small subunit contains 1 molecule of ribosomal RNA (18S rRNA) and 33 different proteins (encoded by 57 genes). The large 60S subunit contains 3 rRNA molecules (25S, 5.8S and 5S rRNA) and 46 different proteins (encoded by 81 genes).

It is found in the cytoplasm. Component of the ribosome, a large ribonucleoprotein complex responsible for the synthesis of proteins in the cell. The small ribosomal subunit (SSU) binds messenger RNAs (mRNAs) and translates the encoded message by selecting cognate aminoacyl-transfer RNA (tRNA) molecules. The large subunit (LSU) contains the ribosomal catalytic site termed the peptidyl transferase center (PTC), which catalyzes the formation of peptide bonds, thereby polymerizing the amino acids delivered by tRNAs into a polypeptide chain. The nascent polypeptides leave the ribosome through a tunnel in the LSU and interact with protein factors that function in enzymatic processing, targeting, and the membrane insertion of nascent chains at the exit of the ribosomal tunnel. The protein is Large ribosomal subunit protein eL8B of Saccharomyces cerevisiae (strain ATCC 204508 / S288c) (Baker's yeast).